The primary structure comprises 372 residues: Probable dual-specificity RNA methyltransferase RlmN (372 aa).

Positions 1–20 (MTSLPLTPVNPDAPARRAAM) are disordered. E112 acts as the Proton acceptor in catalysis. Positions 118–357 (YPDRVTVCLS…STTVRDTRGR (240 aa)) constitute a Radical SAM core domain. Cysteines 125 and 363 form a disulfide. [4Fe-4S] cluster is bound by residues C132, C136, and C139. S-adenosyl-L-methionine is bound by residues 187–188 (GE), S221, 244–246 (SLH), and N320. C363 (S-methylcysteine intermediate) is an active-site residue.

It belongs to the radical SAM superfamily. RlmN family. It depends on [4Fe-4S] cluster as a cofactor.

The protein resides in the cytoplasm. It carries out the reaction adenosine(2503) in 23S rRNA + 2 reduced [2Fe-2S]-[ferredoxin] + 2 S-adenosyl-L-methionine = 2-methyladenosine(2503) in 23S rRNA + 5'-deoxyadenosine + L-methionine + 2 oxidized [2Fe-2S]-[ferredoxin] + S-adenosyl-L-homocysteine. It catalyses the reaction adenosine(37) in tRNA + 2 reduced [2Fe-2S]-[ferredoxin] + 2 S-adenosyl-L-methionine = 2-methyladenosine(37) in tRNA + 5'-deoxyadenosine + L-methionine + 2 oxidized [2Fe-2S]-[ferredoxin] + S-adenosyl-L-homocysteine. Specifically methylates position 2 of adenine 2503 in 23S rRNA and position 2 of adenine 37 in tRNAs. The sequence is that of Probable dual-specificity RNA methyltransferase RlmN from Salinispora tropica (strain ATCC BAA-916 / DSM 44818 / JCM 13857 / NBRC 105044 / CNB-440).